The sequence spans 394 residues: Methionine import ATP-binding protein MetN 2 (394 aa).

An ABC transporter domain is found at 39–278; the sequence is VSLEQVGKVF…PRHGATRALL (240 aa). ATP is bound at residue 75-82; the sequence is GRSGAGKS.

It belongs to the ABC transporter superfamily. Methionine importer (TC 3.A.1.24) family. The complex is composed of two ATP-binding proteins (MetN), two transmembrane proteins (MetI) and a solute-binding protein (MetQ).

It is found in the cell inner membrane. The enzyme catalyses L-methionine(out) + ATP + H2O = L-methionine(in) + ADP + phosphate + H(+). It catalyses the reaction D-methionine(out) + ATP + H2O = D-methionine(in) + ADP + phosphate + H(+). Functionally, part of the ABC transporter complex MetNIQ involved in methionine import. Responsible for energy coupling to the transport system. The protein is Methionine import ATP-binding protein MetN 2 of Burkholderia cenocepacia (strain HI2424).